The chain runs to 462 residues: ATP synthase subunit beta (462 aa).

152–159 (GGAGVGKT) is a binding site for ATP.

The protein belongs to the ATPase alpha/beta chains family. In terms of assembly, F-type ATPases have 2 components, CF(1) - the catalytic core - and CF(0) - the membrane proton channel. CF(1) has five subunits: alpha(3), beta(3), gamma(1), delta(1), epsilon(1). CF(0) has three main subunits: a(1), b(2) and c(9-12). The alpha and beta chains form an alternating ring which encloses part of the gamma chain. CF(1) is attached to CF(0) by a central stalk formed by the gamma and epsilon chains, while a peripheral stalk is formed by the delta and b chains.

It localises to the cell inner membrane. The enzyme catalyses ATP + H2O + 4 H(+)(in) = ADP + phosphate + 5 H(+)(out). Functionally, produces ATP from ADP in the presence of a proton gradient across the membrane. The catalytic sites are hosted primarily by the beta subunits. The polypeptide is ATP synthase subunit beta (Blochmanniella pennsylvanica (strain BPEN)).